We begin with the raw amino-acid sequence, 429 residues long: Histidine--tRNA ligase (429 aa).

It belongs to the class-II aminoacyl-tRNA synthetase family. As to quaternary structure, homodimer.

Its subcellular location is the cytoplasm. The enzyme catalyses tRNA(His) + L-histidine + ATP = L-histidyl-tRNA(His) + AMP + diphosphate + H(+). This Prochlorococcus marinus subsp. pastoris (strain CCMP1986 / NIES-2087 / MED4) protein is Histidine--tRNA ligase.